The sequence spans 263 residues: ABC transporter I family member 17 (263 aa).

In terms of domain architecture, ABC transporter spans 29-260 (IRVHDLTRVA…THPMAQRFLQ (232 aa)). An ATP-binding site is contributed by 62 to 69 (GPSGSGKS).

It belongs to the ABC transporter superfamily. ABCI family.

The sequence is that of ABC transporter I family member 17 (ABCI17) from Arabidopsis thaliana (Mouse-ear cress).